The chain runs to 565 residues: NAD-dependent malic enzyme (565 aa).

Tyr104 (proton donor) is an active-site residue. Arg157 is an NAD(+) binding site. Lys175 serves as the catalytic Proton acceptor. The a divalent metal cation site is built by Glu246, Asp247, and Asp270. Residues Asp270 and Asn418 each contribute to the NAD(+) site.

This sequence belongs to the malic enzymes family. In terms of assembly, homotetramer. Requires Mg(2+) as cofactor. Mn(2+) is required as a cofactor.

The catalysed reaction is (S)-malate + NAD(+) = pyruvate + CO2 + NADH. It catalyses the reaction oxaloacetate + H(+) = pyruvate + CO2. The polypeptide is NAD-dependent malic enzyme (Salmonella heidelberg (strain SL476)).